Consider the following 65-residue polypeptide: Adrenergic toxin rho-elapitoxin-Dp1b (65 aa).

Intrachain disulfides connect Cys-3–Cys-24, Cys-17–Cys-42, Cys-46–Cys-57, and Cys-58–Cys-63.

This sequence belongs to the three-finger toxin family. Short-chain subfamily. Aminergic toxin sub-subfamily. In terms of tissue distribution, expressed by the venom gland.

It is found in the secreted. Functionally, highly potent on various alpha-adrenoceptors (ADRA) (subnanomolar affinity for ADRA1A). Order of potency is the following: ADRA1A (Ki=0.37 nM) &gt; ADRA1B (Ki=10.47 nM) &gt; ADRA1D (Ki=104.71 nM) &gt; ADRA2C (Ki=165.96 nM). Were also found to reversibly bind to muscarinic acetylcholine receptors (CHRM), but the affinity is much weaker (CHRM1, Ki=1778.28 nM; CHRM4, Ki=4466.84 nM; CHRM2, Ki=17782.79 nM). The polypeptide is Adrenergic toxin rho-elapitoxin-Dp1b (Dendroaspis polylepis polylepis (Black mamba)).